Reading from the N-terminus, the 365-residue chain is Eukaryotic translation initiation factor 3 subunit H (365 aa).

The region spanning 11–160 (VKVEALVVMK…LRAFRLSPKF (150 aa)) is the MPN domain.

Belongs to the eIF-3 subunit H family. In terms of assembly, component of the eukaryotic translation initiation factor 3 (eIF-3) complex.

Its subcellular location is the cytoplasm. Component of the eukaryotic translation initiation factor 3 (eIF-3) complex, which is involved in protein synthesis of a specialized repertoire of mRNAs and, together with other initiation factors, stimulates binding of mRNA and methionyl-tRNAi to the 40S ribosome. The eIF-3 complex specifically targets and initiates translation of a subset of mRNAs involved in cell proliferation. The chain is Eukaryotic translation initiation factor 3 subunit H from Aspergillus fumigatus (strain CBS 144.89 / FGSC A1163 / CEA10) (Neosartorya fumigata).